Reading from the N-terminus, the 165-residue chain is Inorganic pyrophosphatase (165 aa).

The substrate site is built by Lys21, Arg35, and Tyr47. Mg(2+)-binding residues include Asp57, Asp62, and Asp94. Tyr131 is a binding site for substrate.

This sequence belongs to the PPase family. Homohexamer. Mg(2+) serves as cofactor.

It localises to the cytoplasm. The enzyme catalyses diphosphate + H2O = 2 phosphate + H(+). Functionally, catalyzes the hydrolysis of inorganic pyrophosphate (PPi) forming two phosphate ions. This is Inorganic pyrophosphatase from Geobacillus stearothermophilus (Bacillus stearothermophilus).